Here is a 179-residue protein sequence, read N- to C-terminus: Large ribosomal subunit protein uL5 (179 aa).

Belongs to the universal ribosomal protein uL5 family. Part of the 50S ribosomal subunit; part of the 5S rRNA/L5/L18/L25 subcomplex. Contacts the 5S rRNA and the P site tRNA. Forms a bridge to the 30S subunit in the 70S ribosome.

This is one of the proteins that bind and probably mediate the attachment of the 5S RNA into the large ribosomal subunit, where it forms part of the central protuberance. In the 70S ribosome it contacts protein S13 of the 30S subunit (bridge B1b), connecting the 2 subunits; this bridge is implicated in subunit movement. Contacts the P site tRNA; the 5S rRNA and some of its associated proteins might help stabilize positioning of ribosome-bound tRNAs. The polypeptide is Large ribosomal subunit protein uL5 (Idiomarina loihiensis (strain ATCC BAA-735 / DSM 15497 / L2-TR)).